A 465-amino-acid polypeptide reads, in one-letter code: Light-independent protochlorophyllide reductase subunit N (465 aa).

3 residues coordinate [4Fe-4S] cluster: Cys-22, Cys-47, and Cys-107.

Belongs to the BchN/ChlN family. In terms of assembly, protochlorophyllide reductase is composed of three subunits; ChlL, ChlN and ChlB. Forms a heterotetramer of two ChlB and two ChlN subunits. The cofactor is [4Fe-4S] cluster.

It localises to the plastid. The protein resides in the chloroplast. The enzyme catalyses chlorophyllide a + oxidized 2[4Fe-4S]-[ferredoxin] + 2 ADP + 2 phosphate = protochlorophyllide a + reduced 2[4Fe-4S]-[ferredoxin] + 2 ATP + 2 H2O. It functions in the pathway porphyrin-containing compound metabolism; chlorophyll biosynthesis (light-independent). In terms of biological role, component of the dark-operative protochlorophyllide reductase (DPOR) that uses Mg-ATP and reduced ferredoxin to reduce ring D of protochlorophyllide (Pchlide) to form chlorophyllide a (Chlide). This reaction is light-independent. The NB-protein (ChlN-ChlB) is the catalytic component of the complex. The protein is Light-independent protochlorophyllide reductase subunit N of Marchantia polymorpha (Common liverwort).